We begin with the raw amino-acid sequence, 709 residues long: Elongation factor G (709 aa).

The 286-residue stretch at 10 to 295 (NQIRNIGIMA…AVVDYLPSPE (286 aa)) folds into the tr-type G domain. GTP contacts are provided by residues 19-26 (AHIDAGKT), 91-95 (DTPGH), and 145-148 (NKMD).

Belongs to the TRAFAC class translation factor GTPase superfamily. Classic translation factor GTPase family. EF-G/EF-2 subfamily.

The protein localises to the cytoplasm. Its function is as follows. Catalyzes the GTP-dependent ribosomal translocation step during translation elongation. During this step, the ribosome changes from the pre-translocational (PRE) to the post-translocational (POST) state as the newly formed A-site-bound peptidyl-tRNA and P-site-bound deacylated tRNA move to the P and E sites, respectively. Catalyzes the coordinated movement of the two tRNA molecules, the mRNA and conformational changes in the ribosome. The sequence is that of Elongation factor G from Bifidobacterium adolescentis (strain ATCC 15703 / DSM 20083 / NCTC 11814 / E194a).